The primary structure comprises 147 residues: Spermidine export protein MdtJ (147 aa).

4 helical membrane passes run 1-21 (MIYWIFLGLAIIAEIIGTLSM), 31-51 (TGHIVMYFMITGSYVMLSLAV), 54-74 (VALGVAYALWEGIGILIITIF), and 81-101 (ETLSPLKIAGLVTLIGGILLV). A compositionally biased stretch (basic residues) spans 105–117 (TRKPKQPNRHRGN). The interval 105–147 (TRKPKQPNRHRGNRPPSVQGLKTQTTGHHKGVAVESGEHHAAA) is disordered.

Belongs to the drug/metabolite transporter (DMT) superfamily. Small multidrug resistance (SMR) (TC 2.A.7.1) family. MdtJ subfamily. Forms a complex with MdtI.

It is found in the cell inner membrane. In terms of biological role, catalyzes the excretion of spermidine. This Yersinia pseudotuberculosis serotype O:3 (strain YPIII) protein is Spermidine export protein MdtJ.